A 417-amino-acid polypeptide reads, in one-letter code: Tyrosine--tRNA ligase (417 aa).

Tyr-40 is a binding site for L-tyrosine. The short motif at 45-54 (ATAASLHVGH) is the 'HIGH' region element. The L-tyrosine site is built by Tyr-177 and Gln-181. The 'KMSKS' region signature appears at 237–241 (KMGKS). Position 240 (Lys-240) interacts with ATP. The S4 RNA-binding domain occupies 351–414 (ISVVQLITRS…AGRKRHALIK (64 aa)).

The protein belongs to the class-I aminoacyl-tRNA synthetase family. TyrS type 1 subfamily. As to quaternary structure, homodimer.

The protein localises to the cytoplasm. The catalysed reaction is tRNA(Tyr) + L-tyrosine + ATP = L-tyrosyl-tRNA(Tyr) + AMP + diphosphate + H(+). Functionally, catalyzes the attachment of tyrosine to tRNA(Tyr) in a two-step reaction: tyrosine is first activated by ATP to form Tyr-AMP and then transferred to the acceptor end of tRNA(Tyr). The protein is Tyrosine--tRNA ligase of Dinoroseobacter shibae (strain DSM 16493 / NCIMB 14021 / DFL 12).